We begin with the raw amino-acid sequence, 138 residues long: Basic phospholipase A2 homolog promutoxin (138 aa).

The N-terminal stretch at 1-16 is a signal peptide; the sequence is MRTLWIMAVLLLGVEG. Disulfide bonds link C42-C132, C44-C60, C59-C112, C65-C138, C66-C105, C73-C98, and C91-C103. Residues 122-133 are important for membrane-damaging activities in eukaryotes and bacteria; heparin-binding; that stretch reads KKHRVTMKFLCK.

The protein belongs to the phospholipase A2 family. Group II subfamily. R49 sub-subfamily. As to quaternary structure, homodimer; non-covalently linked. Expressed by the venom gland.

Its subcellular location is the secreted. Functionally, snake venom phospholipase A2 homolog that lacks enzymatic activity. Exhibits potent myotoxicity causing myonecrosis and edema in the gastrocnemius muscle of mice. Is also able to stimulate the release of IL12 (IL12A-IL12B), TNF-alpha (TNF), IL6 and IL1-beta (IL1B) from human monocytes, and induce IL2, TNFalpha and IL6 release from T-cells. A model of myotoxic mechanism has been proposed: an apo Lys49-PLA2 is activated by the entrance of a hydrophobic molecule (e.g. fatty acid) at the hydrophobic channel of the protein leading to a reorientation of a monomer. This reorientation causes a transition between 'inactive' to 'active' states, causing alignment of C-terminal and membrane-docking sites (MDoS) side-by-side and putting the membrane-disruption sites (MDiS) in the same plane, exposed to solvent and in a symmetric position for both monomers. The MDoS region stabilizes the toxin on membrane by the interaction of charged residues with phospholipid head groups. Subsequently, the MDiS region destabilizes the membrane with penetration of hydrophobic residues. This insertion causes a disorganization of the membrane, allowing an uncontrolled influx of ions (i.e. calcium and sodium), and eventually triggering irreversible intracellular alterations and cell death. The polypeptide is Basic phospholipase A2 homolog promutoxin (Protobothrops mucrosquamatus (Taiwan habu)).